Here is a 283-residue protein sequence, read N- to C-terminus: Putative S-adenosyl-L-methionine-dependent methyltransferase SCO7813 (283 aa).

Residues Asp121 and 150–151 (DL) contribute to the S-adenosyl-L-methionine site. Residues 264–283 (MSTLPQHEDGPGGLISAVRR) are disordered.

It belongs to the UPF0677 family.

Functionally, exhibits S-adenosyl-L-methionine-dependent methyltransferase activity. The chain is Putative S-adenosyl-L-methionine-dependent methyltransferase SCO7813 from Streptomyces coelicolor (strain ATCC BAA-471 / A3(2) / M145).